The sequence spans 387 residues: Penicillopepsin-1 (387 aa).

Positions 1–19 (MVNSKTVVSALALSALAAA) are cleaved as a signal peptide. Positions 20–66 (APAPSSTTSFSINQVAVKKPAIHPAVKYAKALAKYHAEIPSNVASAA) are cleaved as a propeptide — activation peptide. Positions 85-384 (YVTPITAGSS…DGDNLQLGFA (300 aa)) constitute a Peptidase A1 domain. Catalysis depends on residues Asp-101 and Asp-279. A glycan (N-linked (GlcNAc...) asparagine) is linked at Asn-304. Cys-315 and Cys-347 form a disulfide bridge.

Belongs to the peptidase A1 family. In terms of assembly, monomer.

Its subcellular location is the secreted. It carries out the reaction Hydrolysis of proteins with broad specificity similar to that of pepsin A, preferring hydrophobic residues at P1 and P1', but also cleaving 20-Gly-|-Glu-21 in the B chain of insulin. Clots milk, and activates trypsinogen.. In terms of biological role, secreted aspartic endopeptidase that allows assimilation of proteinaceous substrates. The scissile peptide bond is attacked by a nucleophilic water molecule activated by two aspartic residues in the active site. Shows a broad primary substrate specificity. Favors hydrophobic residues at the P1 and P1' positions, but can also activate trypsinogen and hydrolyze the B chain of insulin between positions 'Gly-20' and 'Glu-21'. The sequence is that of Penicillopepsin-1 (pepA) from Talaromyces stipitatus (strain ATCC 10500 / CBS 375.48 / QM 6759 / NRRL 1006) (Penicillium stipitatum).